The chain runs to 485 residues: MEKKSLLILGTASHVGKSSVVTAICRILSRNYRVAPFKAQNMSLNSWITKDGKEIGIAQAIQAKAAGTEPTADMNPVLLKPKGDCVSQVILLGEPYADKSAGQYYDSIEEMNGVLEGALERLWKEHDIIVMEGAGGAAEINLYERDVVNVGTARLTQAPIILVGDIERGGVFASLYGTVALLPEDVKKNVKGFIINKFRGDPEILKPGLKQLEEITGIPVLGVLPHFKLRIPSEDSVSLGDKEGAKNEKEVEIAVIRLPRISNFTDFEPLEGLVKVHYVDIDEDLGNPDAIMIPGTKNTINDLLDLRASGMDKKIQAFKGKIPIFGICGGYQMLGRTIFDSGVENGVEAEFEGLRLLDIGTKFGEYKKRTIQVTKKVNGYGPILKSIDGEDIKGYEIHMGVTDSNRTVFGDDGAIDEEGLVIGTYLHGLFDNENIRNALVRYLCEKKGLEYRPEEIISENDAYEELANRFEQNIDMEKLYEIAGI.

The GATase cobBQ-type domain occupies 250-435; the sequence is EVEIAVIRLP…LHGLFDNENI (186 aa). Residue Cys328 is the Nucleophile of the active site. The active site involves His427.

The protein belongs to the CobB/CobQ family. CobQ subfamily.

It functions in the pathway cofactor biosynthesis; adenosylcobalamin biosynthesis. Its function is as follows. Catalyzes amidations at positions B, D, E, and G on adenosylcobyrinic A,C-diamide. NH(2) groups are provided by glutamine, and one molecule of ATP is hydrogenolyzed for each amidation. This Methanosarcina acetivorans (strain ATCC 35395 / DSM 2834 / JCM 12185 / C2A) protein is Probable cobyric acid synthase.